A 258-amino-acid chain; its full sequence is Indole-3-glycerol phosphate synthase (258 aa).

The protein belongs to the TrpC family.

It catalyses the reaction 1-(2-carboxyphenylamino)-1-deoxy-D-ribulose 5-phosphate + H(+) = (1S,2R)-1-C-(indol-3-yl)glycerol 3-phosphate + CO2 + H2O. Its pathway is amino-acid biosynthesis; L-tryptophan biosynthesis; L-tryptophan from chorismate: step 4/5. This is Indole-3-glycerol phosphate synthase from Chlorobium phaeovibrioides (strain DSM 265 / 1930) (Prosthecochloris vibrioformis (strain DSM 265)).